A 171-amino-acid chain; its full sequence is Shikimate kinase (171 aa).

Position 14–19 (14–19 (GAGKST)) interacts with ATP. Position 18 (Ser-18) interacts with Mg(2+). Residues Asp-36, Arg-60, and Gly-82 each contribute to the substrate site. An ATP-binding site is contributed by Arg-120. Residue Arg-139 participates in substrate binding. Residue Gln-156 coordinates ATP.

The protein belongs to the shikimate kinase family. As to quaternary structure, monomer. The cofactor is Mg(2+).

It localises to the cytoplasm. The catalysed reaction is shikimate + ATP = 3-phosphoshikimate + ADP + H(+). Its pathway is metabolic intermediate biosynthesis; chorismate biosynthesis; chorismate from D-erythrose 4-phosphate and phosphoenolpyruvate: step 5/7. In terms of biological role, catalyzes the specific phosphorylation of the 3-hydroxyl group of shikimic acid using ATP as a cosubstrate. The protein is Shikimate kinase of Shewanella baltica (strain OS195).